We begin with the raw amino-acid sequence, 188 residues long: GTPase KRas (188 aa).

M1 is subject to N-acetylmethionine. Residue T2 is modified to N-acetylthreonine; in GTPase KRas, N-terminally processed. Residues 10-18 (GAGGVGKSA), 29-35 (VDEYDPT), and 59-60 (AG) each bind GTP. The Effector region motif lies at 32-40 (YDPTIEDSY). K104 bears the N6-acetyllysine mark. Residue 116–119 (NKCD) participates in GTP binding. The segment at 166–185 (HKEKMSKDGKKKKKKSKTKC) is hypervariable region. The tract at residues 167-188 (KEKMSKDGKKKKKKSKTKCIIM) is disordered. A Cysteine methyl ester modification is found at C185. C185 carries S-farnesyl cysteine lipidation. Positions 186-188 (IIM) are cleaved as a propeptide — removed in mature form.

Belongs to the small GTPase superfamily. Ras family. Interacts with PHLPP. Interacts (active GTP-bound form preferentially) with RGS14. Interacts (when farnesylated) with PDE6D; this promotes dissociation from the cell membrane. Interacts with SOS1. Interacts (when farnesylated) with GPR31. Interacts with RAP1GDS1. Interacts (active GTP-bound form) with both SHOC2 and PP1c (all isoforms) to form a tertiary complex; SHOC2 and PP1c preferably bind M-Ras/MRAS, but they also bind K-Ras/KRAS, N-Ras/NRAS and H-Ras/HRAS. Interacts (GTP-bound form) with MAPKAP1/SIN1; inhibiting K-Ras/KRAS activity. Post-translationally, acetylation at Lys-104 prevents interaction with guanine nucleotide exchange factors (GEFs).

Its subcellular location is the cell membrane. The protein resides in the cytoplasm. It is found in the cytosol. The catalysed reaction is GTP + H2O = GDP + phosphate + H(+). Alternates between an inactive form bound to GDP and an active form bound to GTP. Activated by a guanine nucleotide-exchange factor (GEF) and inactivated by a GTPase-activating protein (GAP). Interaction with SOS1 promotes exchange of bound GDP to GTP. Functionally, ras proteins bind GDP/GTP and possess intrinsic GTPase activity. Plays an important role in the regulation of cell proliferation. Plays a role in promoting oncogenic events by inducing transcriptional silencing of tumor suppressor genes (TSGs) in colorectal cancer (CRC) cells in a ZNF304-dependent manner. This chain is GTPase KRas (KRAS), found in Monodelphis domestica (Gray short-tailed opossum).